The following is a 251-amino-acid chain: Triosephosphate isomerase (251 aa).

10-12 (NWK) provides a ligand contact to substrate. Catalysis depends on His95, which acts as the Electrophile. Glu167 serves as the catalytic Proton acceptor. Residues Gly173, Ser213, and 234–235 (GG) each bind substrate.

It belongs to the triosephosphate isomerase family. Homodimer.

The protein localises to the cytoplasm. The enzyme catalyses D-glyceraldehyde 3-phosphate = dihydroxyacetone phosphate. It functions in the pathway carbohydrate biosynthesis; gluconeogenesis. Its pathway is carbohydrate degradation; glycolysis; D-glyceraldehyde 3-phosphate from glycerone phosphate: step 1/1. In terms of biological role, involved in the gluconeogenesis. Catalyzes stereospecifically the conversion of dihydroxyacetone phosphate (DHAP) to D-glyceraldehyde-3-phosphate (G3P). This chain is Triosephosphate isomerase, found in Acetivibrio thermocellus (strain ATCC 27405 / DSM 1237 / JCM 9322 / NBRC 103400 / NCIMB 10682 / NRRL B-4536 / VPI 7372) (Clostridium thermocellum).